Consider the following 366-residue polypeptide: Phosphoserine aminotransferase (366 aa).

Arg42 is a binding site for L-glutamate. Residues 76 to 77, Trp101, Thr156, Asp178, and Gln201 each bind pyridoxal 5'-phosphate; that span reads AT. Position 202 is an N6-(pyridoxal phosphate)lysine (Lys202). Pyridoxal 5'-phosphate is bound at residue 243-244; sequence NT.

The protein belongs to the class-V pyridoxal-phosphate-dependent aminotransferase family. SerC subfamily. As to quaternary structure, homodimer. It depends on pyridoxal 5'-phosphate as a cofactor.

It localises to the cytoplasm. The enzyme catalyses O-phospho-L-serine + 2-oxoglutarate = 3-phosphooxypyruvate + L-glutamate. It carries out the reaction 4-(phosphooxy)-L-threonine + 2-oxoglutarate = (R)-3-hydroxy-2-oxo-4-phosphooxybutanoate + L-glutamate. It functions in the pathway amino-acid biosynthesis; L-serine biosynthesis; L-serine from 3-phospho-D-glycerate: step 2/3. Its pathway is cofactor biosynthesis; pyridoxine 5'-phosphate biosynthesis; pyridoxine 5'-phosphate from D-erythrose 4-phosphate: step 3/5. Functionally, catalyzes the reversible conversion of 3-phosphohydroxypyruvate to phosphoserine and of 3-hydroxy-2-oxo-4-phosphonooxybutanoate to phosphohydroxythreonine. The polypeptide is Phosphoserine aminotransferase (Aromatoleum aromaticum (strain DSM 19018 / LMG 30748 / EbN1) (Azoarcus sp. (strain EbN1))).